The chain runs to 305 residues: N-acetylmuramic acid 6-phosphate etherase (305 aa).

The region spanning 54–217 (AVPQLERGGR…SSALMVRLGK (164 aa)) is the SIS domain. Catalysis depends on E82, which acts as the Proton donor. Residue E113 is part of the active site.

It belongs to the GCKR-like family. MurNAc-6-P etherase subfamily. Homodimer.

It carries out the reaction N-acetyl-D-muramate 6-phosphate + H2O = N-acetyl-D-glucosamine 6-phosphate + (R)-lactate. It participates in amino-sugar metabolism; N-acetylmuramate degradation. Functionally, specifically catalyzes the cleavage of the D-lactyl ether substituent of MurNAc 6-phosphate, producing GlcNAc 6-phosphate and D-lactate. This is N-acetylmuramic acid 6-phosphate etherase from Deinococcus radiodurans (strain ATCC 13939 / DSM 20539 / JCM 16871 / CCUG 27074 / LMG 4051 / NBRC 15346 / NCIMB 9279 / VKM B-1422 / R1).